The chain runs to 157 residues: UPF0225 protein PA14_50900 (157 aa).

It belongs to the UPF0225 family.

In Pseudomonas aeruginosa (strain UCBPP-PA14), this protein is UPF0225 protein PA14_50900.